The sequence spans 250 residues: Uracil-DNA glycosylase (250 aa).

D78 acts as the Proton acceptor in catalysis. The interval 228-250 (RGQKPVDWSGEQNNASRQGKFAL) is disordered.

The protein belongs to the uracil-DNA glycosylase (UDG) superfamily. UNG family.

Its subcellular location is the cytoplasm. The enzyme catalyses Hydrolyzes single-stranded DNA or mismatched double-stranded DNA and polynucleotides, releasing free uracil.. Excises uracil residues from the DNA which can arise as a result of misincorporation of dUMP residues by DNA polymerase or due to deamination of cytosine. The sequence is that of Uracil-DNA glycosylase from Bordetella bronchiseptica (strain ATCC BAA-588 / NCTC 13252 / RB50) (Alcaligenes bronchisepticus).